A 494-amino-acid chain; its full sequence is Hepatic triacylglycerol lipase (494 aa).

An N-terminal signal peptide occupies residues 1-21; the sequence is MGNHLQISVSLVLCIFIQSSA. Residue Asn-79 is glycosylated (N-linked (GlcNAc...) asparagine). The active-site Nucleophile is Ser-169. Residue Asp-195 is the Charge relay system of the active site. The essential for determining substrate specificity stretch occupies residues 255–278; the sequence is CHFLELYKHIAEHGLNAITQTINC. His-280 functions as the Charge relay system in the catalytic mechanism. The PLAT domain occupies 353–487; the sequence is YHYQFKIQFI…HPTQEKVFVK (135 aa). Residue Asn-398 is glycosylated (N-linked (GlcNAc...) asparagine).

It belongs to the AB hydrolase superfamily. Lipase family. In terms of assembly, homodimer.

The protein resides in the secreted. The enzyme catalyses a triacylglycerol + H2O = a diacylglycerol + a fatty acid + H(+). It carries out the reaction a 1-acyl-sn-glycero-3-phosphocholine + H2O = sn-glycerol 3-phosphocholine + a fatty acid + H(+). It catalyses the reaction a 1,2-diacyl-sn-glycero-3-phosphocholine + H2O = a 2-acyl-sn-glycero-3-phosphocholine + a fatty acid + H(+). The catalysed reaction is 1,2-di-(9Z-octadecenoyl)-sn-glycerol + H2O = 2-(9Z-octadecenoyl)-glycerol + (9Z)-octadecenoate + H(+). The enzyme catalyses 1,2,3-tri-(9Z-octadecenoyl)-glycerol + H2O = 2,3-di-(9Z)-octadecenoyl-sn-glycerol + (9Z)-octadecenoate + H(+). It carries out the reaction 1-(9Z-octadecenoyl)-sn-glycero-3-phospho-L-serine + H2O = sn-glycero-3-phospho-L-serine + (9Z)-octadecenoate + H(+). It catalyses the reaction 1-hexadecanoyl-sn-glycero-3-phosphocholine + H2O = sn-glycerol 3-phosphocholine + hexadecanoate + H(+). The catalysed reaction is 1,3-di-(9Z-octadecenoyl)-glycerol + H2O = 3-(9Z-octadecenoyl)-sn-glycerol + (9Z)-octadecenoate + H(+). The enzyme catalyses 1,2,3-tri-(9Z-octadecenoyl)-glycerol + H2O = di-(9Z)-octadecenoylglycerol + (9Z)-octadecenoate + H(+). It carries out the reaction 1,2-di-(9Z-octadecenoyl)-sn-glycero-3-phosphocholine + H2O = (9Z-octadecenoyl)-sn-glycero-3-phosphocholine + (9Z)-octadecenoate + H(+). It catalyses the reaction 1,2,3-tributanoylglycerol + H2O = dibutanoylglycerol + butanoate + H(+). The catalysed reaction is 1,2-dihexadecanoyl-sn-glycero-3-phosphocholine + H2O = hexadecanoyl-sn-glycero-3-phosphocholine + hexadecanoate + H(+). With respect to regulation, phospholipase A1 and lysophospholipase activities are inhibited by annexin II. Functionally, catalyzes the hydrolysis of triglycerides and phospholipids present in circulating plasma lipoproteins, including chylomicrons, intermediate density lipoproteins (IDL), low density lipoproteins (LDL) of large size and high density lipoproteins (HDL), releasing free fatty acids (FFA) and smaller lipoprotein particles. Also exhibits lysophospholipase activity. Can hydrolyze both neutral lipid and phospholipid substrates but shows a greater binding affinity for neutral lipid substrates than phospholipid substrates. In native LDL, preferentially hydrolyzes the phosphatidylcholine species containing polyunsaturated fatty acids at sn-2 position. The chain is Hepatic triacylglycerol lipase (Lipc) from Rattus norvegicus (Rat).